A 657-amino-acid polypeptide reads, in one-letter code: Macrolide export ATP-binding/permease protein MacB (657 aa).

An ABC transporter domain is found at 5–242 (LELLDVHRTY…RAVTGESAFD (238 aa)). 41–48 (GASGSGKS) is an ATP binding site. The next 4 helical transmembrane spans lie at 276 to 296 (FLSVLGIFVGVASVIAMMALG), 538 to 558 (IAAISLLVGGIGIMNIMLVSV), 596 to 616 (IGVFAGVGISLILAFFAGWAV), and 620 to 640 (LLSVVLATTFSALIGVFFGLW).

It belongs to the ABC transporter superfamily. Macrolide exporter (TC 3.A.1.122) family. In terms of assembly, homodimer.

Its subcellular location is the cell inner membrane. Non-canonical ABC transporter that contains transmembrane domains (TMD), which form a pore in the inner membrane, and an ATP-binding domain (NBD), which is responsible for energy generation. Confers resistance against macrolides. The protein is Macrolide export ATP-binding/permease protein MacB of Chlorobium phaeobacteroides (strain DSM 266 / SMG 266 / 2430).